The following is a 369-amino-acid chain: Anhydro-N-acetylmuramic acid kinase (369 aa).

12–19 (GTSLDGVD) serves as a coordination point for ATP.

The protein belongs to the anhydro-N-acetylmuramic acid kinase family.

It catalyses the reaction 1,6-anhydro-N-acetyl-beta-muramate + ATP + H2O = N-acetyl-D-muramate 6-phosphate + ADP + H(+). The protein operates within amino-sugar metabolism; 1,6-anhydro-N-acetylmuramate degradation. Its pathway is cell wall biogenesis; peptidoglycan recycling. In terms of biological role, catalyzes the specific phosphorylation of 1,6-anhydro-N-acetylmuramic acid (anhMurNAc) with the simultaneous cleavage of the 1,6-anhydro ring, generating MurNAc-6-P. Is required for the utilization of anhMurNAc either imported from the medium or derived from its own cell wall murein, and thus plays a role in cell wall recycling. This is Anhydro-N-acetylmuramic acid kinase from Escherichia coli O139:H28 (strain E24377A / ETEC).